Here is a 205-residue protein sequence, read N- to C-terminus: Venom allergen 5 (205 aa).

4 disulfide bridges follow: C4/C16, C8/C104, C28/C96, and C171/C188. Positions 47–190 (VNEHNRFRQK…MQHHYLICNY (144 aa)) constitute an SCP domain.

The protein belongs to the CRISP family. Venom allergen 5-like subfamily. As to expression, expressed by the venom gland.

It localises to the secreted. This chain is Venom allergen 5, found in Polistes fuscatus (Paper wasp).